A 507-amino-acid chain; its full sequence is Extracellular elastase (507 aa).

The first 28 residues, 1–28, serve as a signal peptide directing secretion; the sequence is MKNFSKFALTSIAALTVASPLVNTEVDA. The propeptide occupies 29–207; that stretch reads KDKVSATQNI…VVDKLNMIKE (179 aa). D347 provides a ligand contact to Ca(2+). Residue H351 coordinates Zn(2+). E352 is an active-site residue. The Zn(2+) site is built by H355 and E375. 9 residues coordinate Ca(2+): D386, E388, D389, L391, E394, Y397, T398, V401, and D404. The active-site Proton donor is the H435.

The protein belongs to the peptidase M4 family. Requires Ca(2+) as cofactor. Zn(2+) serves as cofactor.

It localises to the secreted. Protease that has a low substrate specificity. Glucagon is preferentially cleaved between aromatic (Phe) and hydrophobic (Val) amino acids. Hydrolyzes casein and elastin. This is Extracellular elastase (sepA) from Staphylococcus epidermidis (strain ATCC 12228 / FDA PCI 1200).